The primary structure comprises 338 residues: D-erythrose-4-phosphate dehydrogenase (338 aa).

11–12 (RI) is an NAD(+) binding site. Substrate-binding positions include 153 to 155 (SCT), R199, 212 to 213 (TK), and R235. C154 (nucleophile) is an active-site residue. Residue N317 coordinates NAD(+).

The protein belongs to the glyceraldehyde-3-phosphate dehydrogenase family. Epd subfamily. Homotetramer.

Its subcellular location is the cytoplasm. The catalysed reaction is D-erythrose 4-phosphate + NAD(+) + H2O = 4-phospho-D-erythronate + NADH + 2 H(+). It functions in the pathway cofactor biosynthesis; pyridoxine 5'-phosphate biosynthesis; pyridoxine 5'-phosphate from D-erythrose 4-phosphate: step 1/5. Catalyzes the NAD-dependent conversion of D-erythrose 4-phosphate to 4-phosphoerythronate. The protein is D-erythrose-4-phosphate dehydrogenase of Shewanella oneidensis (strain ATCC 700550 / JCM 31522 / CIP 106686 / LMG 19005 / NCIMB 14063 / MR-1).